Reading from the N-terminus, the 390-residue chain is Chorismate synthase (390 aa).

Arg-48 contributes to the NADP(+) binding site. FMN contacts are provided by residues 126–128 (RAS), Gly-286, 301–305 (KPTSS), and Arg-328.

It belongs to the chorismate synthase family. The cofactor is FMNH2.

It catalyses the reaction 5-O-(1-carboxyvinyl)-3-phosphoshikimate = chorismate + phosphate. It participates in metabolic intermediate biosynthesis; chorismate biosynthesis; chorismate from D-erythrose 4-phosphate and phosphoenolpyruvate: step 7/7. Catalyzes the anti-1,4-elimination of the C-3 phosphate and the C-6 proR hydrogen from 5-enolpyruvylshikimate-3-phosphate (EPSP) to yield chorismate, which is the branch point compound that serves as the starting substrate for the three terminal pathways of aromatic amino acid biosynthesis. This reaction introduces a second double bond into the aromatic ring system. The polypeptide is Chorismate synthase (Sulfurisphaera tokodaii (strain DSM 16993 / JCM 10545 / NBRC 100140 / 7) (Sulfolobus tokodaii)).